The primary structure comprises 253 residues: 5-oxoprolinase subunit A (253 aa).

Belongs to the LamB/PxpA family. In terms of assembly, forms a complex composed of PxpA, PxpB and PxpC.

The enzyme catalyses 5-oxo-L-proline + ATP + 2 H2O = L-glutamate + ADP + phosphate + H(+). Its function is as follows. Catalyzes the cleavage of 5-oxoproline to form L-glutamate coupled to the hydrolysis of ATP to ADP and inorganic phosphate. This Shouchella clausii (strain KSM-K16) (Alkalihalobacillus clausii) protein is 5-oxoprolinase subunit A.